The sequence spans 691 residues: Serotransferrin-2 (691 aa).

The N-terminal stretch at 1-18 (MKLLLLSALLGCLATAYA) is a signal peptide. 2 Transferrin-like domains span residues 25–329 (VKWC…SLKK) and 340–670 (IKWC…SLRK). Cysteines 28 and 50 form a disulfide. Fe(3+) is bound by residues D74 and Y104. Disulfide bonds link C127–C207, C172–C186, and C235–C249. Residues T129, S134, G136, and W137 each coordinate hydrogencarbonate. N-linked (GlcNAc...) asparagine glycosylation is present at N169. Y201 is a binding site for Fe(3+). H257 is a binding site for Fe(3+). Intrachain disulfides connect C343/C379 and C353/C370. D394 and Y428 together coordinate Fe(3+). 7 cysteine pairs are disulfide-bonded: C404/C682, C419/C643, C451/C530, C475/C671, C485/C499, C496/C513, and C570/C584. Residues T453, R457, A459, and G460 each contribute to the hydrogencarbonate site. A Fe(3+)-binding site is contributed by Y524. Position 592 (H592) interacts with Fe(3+).

It belongs to the transferrin family. In terms of assembly, monomer. In terms of tissue distribution, abundant in liver and serum with smaller amounts found in the stomach and kidney.

The protein resides in the secreted. Transferrins are iron binding transport proteins which can bind two Fe(3+) ions in association with the binding of an anion, usually bicarbonate. It is responsible for the transport of iron from sites of absorption and heme degradation to those of storage and utilization. Serum transferrin may also have a further role in stimulating cell proliferation. This Salmo salar (Atlantic salmon) protein is Serotransferrin-2 (tf2).